We begin with the raw amino-acid sequence, 169 residues long: Peptide methionine sulfoxide reductase MsrA (169 aa).

Cysteine 10 is an active-site residue.

This sequence belongs to the MsrA Met sulfoxide reductase family.

It carries out the reaction L-methionyl-[protein] + [thioredoxin]-disulfide + H2O = L-methionyl-(S)-S-oxide-[protein] + [thioredoxin]-dithiol. It catalyses the reaction [thioredoxin]-disulfide + L-methionine + H2O = L-methionine (S)-S-oxide + [thioredoxin]-dithiol. Its function is as follows. Has an important function as a repair enzyme for proteins that have been inactivated by oxidation. Catalyzes the reversible oxidation-reduction of methionine sulfoxide in proteins to methionine. The protein is Peptide methionine sulfoxide reductase MsrA of Streptococcus agalactiae serotype Ia (strain ATCC 27591 / A909 / CDC SS700).